The sequence spans 309 residues: Probable manganese-dependent inorganic pyrophosphatase (309 aa).

6 residues coordinate Mn(2+): histidine 9, aspartate 13, aspartate 15, aspartate 75, histidine 97, and aspartate 149.

It belongs to the PPase class C family. The cofactor is Mn(2+).

The protein resides in the cytoplasm. The enzyme catalyses diphosphate + H2O = 2 phosphate + H(+). The polypeptide is Probable manganese-dependent inorganic pyrophosphatase (Staphylococcus epidermidis (strain ATCC 12228 / FDA PCI 1200)).